The following is a 262-amino-acid chain: Trypsin eta (262 aa).

The N-terminal stretch at 1–22 is a signal peptide; sequence MNKVILRILAVLFLLGIYAVSA. The propeptide at 23–27 is activation peptide; it reads QSDGR. A Peptidase S1 domain is found at 28-259; that stretch reads IVGGADTSSY…YKDWIAKQRT (232 aa). Cys59 and Cys75 are joined by a disulfide. Residues His74 and Asp120 each act as charge relay system in the active site. Intrachain disulfides connect Cys185-Cys200 and Cys211-Cys235. The active-site Charge relay system is Ser215.

It belongs to the peptidase S1 family.

It localises to the secreted. The protein resides in the extracellular space. It carries out the reaction Preferential cleavage: Arg-|-Xaa, Lys-|-Xaa.. This is Trypsin eta (etaTry) from Drosophila melanogaster (Fruit fly).